Consider the following 282-residue polypeptide: Bifunctional protein FolD (282 aa).

NADP(+) contacts are provided by residues 166–168 and Ser191; that span reads GRS.

The protein belongs to the tetrahydrofolate dehydrogenase/cyclohydrolase family. Homodimer.

It carries out the reaction (6R)-5,10-methylene-5,6,7,8-tetrahydrofolate + NADP(+) = (6R)-5,10-methenyltetrahydrofolate + NADPH. It catalyses the reaction (6R)-5,10-methenyltetrahydrofolate + H2O = (6R)-10-formyltetrahydrofolate + H(+). Its pathway is one-carbon metabolism; tetrahydrofolate interconversion. Its function is as follows. Catalyzes the oxidation of 5,10-methylenetetrahydrofolate to 5,10-methenyltetrahydrofolate and then the hydrolysis of 5,10-methenyltetrahydrofolate to 10-formyltetrahydrofolate. This Acidovorax ebreus (strain TPSY) (Diaphorobacter sp. (strain TPSY)) protein is Bifunctional protein FolD.